A 482-amino-acid chain; its full sequence is Putative metallophosphoesterase F40B5.2 (482 aa).

4 helical membrane passes run 15 to 35, 129 to 149, 156 to 176, and 205 to 225; these read MNLK…SIAI, ALMM…YIFL, IAIT…FLLI, and CYHI…GLYT. A divalent metal cation is bound by residues Asp-256, His-258, Asp-288, Asn-319, His-421, and His-423.

Belongs to the metallophosphoesterase superfamily. LOC643853 family.

Its subcellular location is the membrane. The polypeptide is Putative metallophosphoesterase F40B5.2 (Caenorhabditis elegans).